A 626-amino-acid chain; its full sequence is (+)-3-carene synthase 1, chloroplastic (626 aa).

The transit peptide at 1 to 45 (MSLISAVPLASSCVSKSLISSVREHKALRRAIATLQMSRPGKSVA) directs the protein to the chloroplast. 3 residues coordinate Mg(2+): Asp377, Asp381, and Asp529. The DDXXD motif signature appears at 377 to 381 (DDMYD).

The protein belongs to the terpene synthase family. Tpsd subfamily. The cofactor is Mg(2+). Requires Mn(2+) as cofactor.

It is found in the plastid. The protein localises to the chloroplast. It catalyses the reaction (2E)-geranyl diphosphate = (+)-car-3-ene + diphosphate. The enzyme catalyses (2E)-geranyl diphosphate = terpinolene + diphosphate. It participates in terpene metabolism; oleoresin biosynthesis. It functions in the pathway secondary metabolite biosynthesis; terpenoid biosynthesis. In terms of biological role, monoterpene synthase (TPS) involved in the biosynthesis of monoterpene natural products included in conifer oleoresin secretions and volatile emissions; these compounds contribute to biotic and abiotic stress defense against herbivores and pathogens. Catalyzes the conversion of (2E)-geranyl diphosphate (GPP) to (+)-3-carene and, to a lower extent, to terpinolene. The chain is (+)-3-carene synthase 1, chloroplastic from Pinus banksiana (Jack pine).